The sequence spans 324 residues: MAASLWVGPRGTINNYPGFNPSVDAEAIRKAIKGIGTDEKTLINILTERSNAQRQLIVKQYQEAYEQALKADLKGDLSGHFEHVMVALITAPAVFDAKQLKKSMRGMGTDEDTLIEILTTRTSRQMKEISQAYYTAYKKNLRDDISSETSGDFRKALLTLADGGRDESLKVDEHLAKKDAQTLYDAGEKKWGTDEDKFTEILCLRSFPQLKLTFDEYRNISQKDIEDSIKGELSGHFEDLLLAVVRCTRNTPAFLAGRLHQALKGAGTDEFTLNRIMVSRSEIDLLDIRREFKKHYGCSLYSAIQSDTSGDYRTVLLKICGGDD.

Annexin repeat units lie at residues 19–90 (FNPS…ALIT), 91–162 (APAV…TLAD), 174–246 (HLAK…AVVR), and 250–321 (NTPA…KICG). At Lys178 the chain carries N6-acetyllysine. The residue at position 268 (Thr268) is a Phosphothreonine.

It belongs to the annexin family.

Functionally, inhibitor of phospholipase A2, also possesses anti-coagulant properties. The sequence is that of Annexin A3 (Anxa3) from Rattus norvegicus (Rat).